The following is a 131-amino-acid chain: Large ribosomal subunit protein bL19 (131 aa).

It belongs to the bacterial ribosomal protein bL19 family.

This protein is located at the 30S-50S ribosomal subunit interface and may play a role in the structure and function of the aminoacyl-tRNA binding site. This Rhodopseudomonas palustris (strain HaA2) protein is Large ribosomal subunit protein bL19.